A 70-amino-acid polypeptide reads, in one-letter code: MNIHYPHPYDPKNKAVIIRQWERICRTKCPINSPHDVDKDYIGTFVEYTFIDKKGRKQHVEEYCLKVTWL.

This is an uncharacterized protein from Enterobacteria phage T4 (Bacteriophage T4).